Reading from the N-terminus, the 440-residue chain is UDP-N-acetylmuramoylalanine--D-glutamate ligase (440 aa).

109-115 (GTNGKTT) is an ATP binding site.

Belongs to the MurCDEF family.

The protein resides in the cytoplasm. It catalyses the reaction UDP-N-acetyl-alpha-D-muramoyl-L-alanine + D-glutamate + ATP = UDP-N-acetyl-alpha-D-muramoyl-L-alanyl-D-glutamate + ADP + phosphate + H(+). The protein operates within cell wall biogenesis; peptidoglycan biosynthesis. Cell wall formation. Catalyzes the addition of glutamate to the nucleotide precursor UDP-N-acetylmuramoyl-L-alanine (UMA). This Rubrobacter xylanophilus (strain DSM 9941 / JCM 11954 / NBRC 16129 / PRD-1) protein is UDP-N-acetylmuramoylalanine--D-glutamate ligase.